Reading from the N-terminus, the 242-residue chain is MTHSPLAQFDIKKLIDIKMFGFDISFTNSSIYMLLASILALTYFYLAFYNRKLVPSRLQVSAEIVYNLVADMLNQNIGVKGHKFIPLVFSLFIFVLFSNLLGMTPYSFTATSHIIVTFTLAIIVFLTVTIVGFVKHGLRFLTLFLPYGTPLWLAPLMIVIELFTYLAKPVSLSLRLAANMMAGHVLLKVIAGFTVSLMIYLKFLPIPIIVILIGFEIFVAILQAYIFTILSCMYLNDAINLH.

6 helical membrane passes run 29–49 (SSIY…LAFY), 84–104 (FIPL…LGMT), 114–134 (IIVT…VGFV), 140–160 (FLTL…MIVI), 181–201 (MAGH…MIYL), and 203–223 (FLPI…AILQ).

The protein belongs to the ATPase A chain family. As to quaternary structure, F-type ATPases have 2 components, CF(1) - the catalytic core - and CF(0) - the membrane proton channel. CF(1) has five subunits: alpha(3), beta(3), gamma(1), delta(1), epsilon(1). CF(0) has three main subunits: a(1), b(2) and c(9-12). The alpha and beta chains form an alternating ring which encloses part of the gamma chain. CF(1) is attached to CF(0) by a central stalk formed by the gamma and epsilon chains, while a peripheral stalk is formed by the delta and b chains.

The protein localises to the cell inner membrane. Its function is as follows. Key component of the proton channel; it plays a direct role in the translocation of protons across the membrane. In Rickettsia akari (strain Hartford), this protein is ATP synthase subunit a.